The following is a 227-amino-acid chain: Chloronitrobenzene nitroreductase (227 aa).

Position 14 to 18 (14 to 18 (RRTKR)) interacts with FMN. Residue serine 44 coordinates NADP(+). Residues 172-173 (GL) and arginine 215 contribute to the FMN site.

The protein belongs to the nitroreductase family. It depends on FMN as a cofactor.

It catalyses the reaction N-phenylhydroxylamine + 2 NADP(+) + H2O = nitrobenzene + 2 NADPH + 2 H(+). It participates in xenobiotic degradation; nitrobenzene degradation. The protein operates within xenobiotic degradation; 4-chloronitrobenzene degradation. Involved in the biodegradation of chlorinated nitroaromatic compounds. Catalyzes the reduction of 4-chloronitrobenzene to yield 1-hydroxylamino-4-chlorobenzene. Probably also able to catalyze the two-electron reduction of nitrobenzene (NB) to produce a nitrosobenzene (NOB) intermediate, which is immediately reduced to hydroxylaminobenzene (HAB) by a second two-electron transfer. The chain is Chloronitrobenzene nitroreductase from Comamonas testosteroni (Pseudomonas testosteroni).